The following is a 270-amino-acid chain: Putative phosphoenolpyruvate synthase regulatory protein (270 aa).

An ADP-binding site is contributed by 150–157; it reads GVSRCGKT.

The protein belongs to the pyruvate, phosphate/water dikinase regulatory protein family. PSRP subfamily.

The catalysed reaction is [pyruvate, water dikinase] + ADP = [pyruvate, water dikinase]-phosphate + AMP + H(+). It catalyses the reaction [pyruvate, water dikinase]-phosphate + phosphate + H(+) = [pyruvate, water dikinase] + diphosphate. Bifunctional serine/threonine kinase and phosphorylase involved in the regulation of the phosphoenolpyruvate synthase (PEPS) by catalyzing its phosphorylation/dephosphorylation. The chain is Putative phosphoenolpyruvate synthase regulatory protein from Shewanella oneidensis (strain ATCC 700550 / JCM 31522 / CIP 106686 / LMG 19005 / NCIMB 14063 / MR-1).